The sequence spans 38 residues: Mu-hexatoxin-Mg1b (38 aa).

Disulfide bonds link C1–C15, C8–C20, and C14–C34. At S38 the chain carries Serine amide.

Belongs to the neurotoxin 14 (magi-1) family. 09 (magi-1) subfamily. As to expression, expressed by the venom gland.

It localises to the secreted. In terms of biological role, insecticidal neurotoxin. Shows competition for site 3 of insect voltage-gated sodium channels (Nav). The chain is Mu-hexatoxin-Mg1b from Macrothele gigas (Japanese funnel web spider).